The sequence spans 453 residues: Cobyrinate a,c-diamide synthase (453 aa).

A GATase cobBQ-type domain is found at 250 to 440; that stretch reads RIAVPFDEAF…IHTHTACLPD (191 aa). The Nucleophile role is filled by cysteine 332.

The protein belongs to the CobB/CbiA family. The cofactor is Mg(2+).

It catalyses the reaction cob(II)yrinate + 2 L-glutamine + 2 ATP + 2 H2O = cob(II)yrinate a,c diamide + 2 L-glutamate + 2 ADP + 2 phosphate + 2 H(+). It carries out the reaction Ni-sirohydrochlorin + 2 L-glutamine + 2 ATP + 2 H2O = Ni-sirohydrochlorin a,c-diamide + 2 L-glutamate + 2 ADP + 2 phosphate + 2 H(+). Its pathway is cofactor biosynthesis; adenosylcobalamin biosynthesis; cob(II)yrinate a,c-diamide from sirohydrochlorin (anaerobic route): step 10/10. Functionally, catalyzes the ATP-dependent amidation of the two carboxylate groups at positions a and c of cobyrinate, using either L-glutamine or ammonia as the nitrogen source. Involved in the biosynthesis of the unique nickel-containing tetrapyrrole coenzyme F430, the prosthetic group of methyl-coenzyme M reductase (MCR), which plays a key role in methanogenesis and anaerobic methane oxidation. Catalyzes the ATP-dependent amidation of the two carboxylate groups at positions a and c of Ni-sirohydrochlorin, using L-glutamine or ammonia as the nitrogen source. The polypeptide is Cobyrinate a,c-diamide synthase (Methanosphaera stadtmanae (strain ATCC 43021 / DSM 3091 / JCM 11832 / MCB-3)).